The sequence spans 567 residues: Glutamine-dependent NAD(+) synthetase (567 aa).

Residues 2 to 242 (LNLTLAQLNF…EDILTVTLDL (241 aa)) form the CN hydrolase domain. Residue glutamate 41 is the Proton acceptor; for glutaminase activity of the active site. Lysine 109 functions as the For glutaminase activity in the catalytic mechanism. Tyrosine 115 contributes to the L-glutamine binding site. The active-site Nucleophile; for glutaminase activity is the cysteine 145. Residues serine 172 and lysine 178 each contribute to the L-glutamine site. A ligase region spans residues 287-567 (PKEEEEIYAA…RMPVTNKFFK (281 aa)). 316-323 (GLSGGIDS) contacts ATP. Position 399 (asparagine 399) interacts with deamido-NAD(+). Threonine 423 contacts ATP. 2 residues coordinate deamido-NAD(+): glutamate 428 and lysine 538.

This sequence in the C-terminal section; belongs to the NAD synthetase family.

It carries out the reaction deamido-NAD(+) + L-glutamine + ATP + H2O = L-glutamate + AMP + diphosphate + NAD(+) + H(+). The protein operates within cofactor biosynthesis; NAD(+) biosynthesis; NAD(+) from deamido-NAD(+) (L-Gln route): step 1/1. Its function is as follows. Catalyzes the ATP-dependent amidation of deamido-NAD to form NAD. Uses L-glutamine as a nitrogen source. The sequence is that of Glutamine-dependent NAD(+) synthetase from Aquifex aeolicus (strain VF5).